The chain runs to 228 residues: Ribonuclease HII (228 aa).

An RNase H type-2 domain is found at 11–202 (GPVAGVDEAG…VVAAAQLHGM (192 aa)). A divalent metal cation-binding residues include D17, E18, and D111.

This sequence belongs to the RNase HII family. Mn(2+) serves as cofactor. Mg(2+) is required as a cofactor.

The protein resides in the cytoplasm. It carries out the reaction Endonucleolytic cleavage to 5'-phosphomonoester.. Its function is as follows. Endonuclease that specifically degrades the RNA of RNA-DNA hybrids. This is Ribonuclease HII from Saccharopolyspora erythraea (strain ATCC 11635 / DSM 40517 / JCM 4748 / NBRC 13426 / NCIMB 8594 / NRRL 2338).